The following is a 122-amino-acid chain: Large ribosomal subunit protein uL14c (122 aa).

The protein belongs to the universal ribosomal protein uL14 family. Part of the 50S ribosomal subunit.

Its subcellular location is the plastid. It localises to the chloroplast. Functionally, binds to 23S rRNA. This Arabis hirsuta (Hairy rock-cress) protein is Large ribosomal subunit protein uL14c.